Consider the following 161-residue polypeptide: Nucleotide-binding protein PFL_4775 (161 aa).

Belongs to the YajQ family.

Its function is as follows. Nucleotide-binding protein. This chain is Nucleotide-binding protein PFL_4775, found in Pseudomonas fluorescens (strain ATCC BAA-477 / NRRL B-23932 / Pf-5).